The chain runs to 213 residues: FMN-dependent NADH:quinone oxidoreductase (213 aa).

Ser10 serves as a coordination point for FMN.

It belongs to the azoreductase type 1 family. In terms of assembly, homodimer. FMN serves as cofactor.

The catalysed reaction is 2 a quinone + NADH + H(+) = 2 a 1,4-benzosemiquinone + NAD(+). It carries out the reaction N,N-dimethyl-1,4-phenylenediamine + anthranilate + 2 NAD(+) = 2-(4-dimethylaminophenyl)diazenylbenzoate + 2 NADH + 2 H(+). Its function is as follows. Quinone reductase that provides resistance to thiol-specific stress caused by electrophilic quinones. Functionally, also exhibits azoreductase activity. Catalyzes the reductive cleavage of the azo bond in aromatic azo compounds to the corresponding amines. The sequence is that of FMN-dependent NADH:quinone oxidoreductase from Opitutus terrae (strain DSM 11246 / JCM 15787 / PB90-1).